A 524-amino-acid chain; its full sequence is Tubulin-specific chaperone E (524 aa).

S2 carries the N-acetylserine modification. The region spanning 27–71 (GAVPPVAGLWLGVEWDNPERGKHDGSHEGTMYFKCRHPTGGSFVR) is the CAP-Gly domain. LRR repeat units lie at residues 154–175 (NIRVVNLSKNLLSTWDEVVLIA), 180–201 (DLEALDLSENKLQFPSDSPTLT), 206–227 (TLKTLVLNKTGITWTEVLHCAP), 231–253 (VLEELYLKSNNISISERPVNVLQ), 254–275 (KMRLLDLSSNPSIDESQLSLIA), 279–300 (RLEHLVLSDIGLSSIHFPDAEI), and 309–330 (ALKYLIVNDNQISEWSFINELD). Positions 343 to 381 (NPLSKADKAEEIIIAKIAQLRTLNRCQILPEERRGAELD) constitute an LRRCT domain. Position 460 is an N6-acetyllysine (K460). At S492 the chain carries Phosphoserine.

It belongs to the TBCE family. Supercomplex made of cofactors A to E. Cofactors A and D function by capturing and stabilizing tubulin in a quasi-native conformation. Cofactor E binds to the cofactor D-tubulin complex; interaction with cofactor C then causes the release of tubulin polypeptides that are committed to the native state. Cofactors B and E can form a heterodimer which binds to alpha-tubulin and enhances their ability to dissociate tubulin heterodimers. Interacts with TBCD. In terms of tissue distribution, ubiquitously expressed.

It localises to the cytoplasm. The protein resides in the cytoskeleton. Functionally, tubulin-folding protein; involved in the second step of the tubulin folding pathway and in the regulation of tubulin heterodimer dissociation. Required for correct organization of microtubule cytoskeleton and mitotic splindle, and maintenance of the neuronal microtubule network. In Mus musculus (Mouse), this protein is Tubulin-specific chaperone E (Tbce).